The sequence spans 510 residues: Maturase K (510 aa).

The protein belongs to the intron maturase 2 family. MatK subfamily.

Its subcellular location is the plastid. The protein localises to the chloroplast. Functionally, usually encoded in the trnK tRNA gene intron. Probably assists in splicing its own and other chloroplast group II introns. The protein is Maturase K of Thuja plicata (Western red-cedar).